The chain runs to 247 residues: 2,3-bisphosphoglycerate-dependent phosphoglycerate mutase (247 aa).

Residues 8 to 15 (RHGESVWN), 21 to 22 (TG), arginine 60, 87 to 90 (ERHY), lysine 98, 114 to 115 (RR), and 183 to 184 (GN) each bind substrate. The Tele-phosphohistidine intermediate role is filled by histidine 9. Residue glutamate 87 is the Proton donor/acceptor of the active site.

This sequence belongs to the phosphoglycerate mutase family. BPG-dependent PGAM subfamily.

The catalysed reaction is (2R)-2-phosphoglycerate = (2R)-3-phosphoglycerate. It participates in carbohydrate degradation; glycolysis; pyruvate from D-glyceraldehyde 3-phosphate: step 3/5. In terms of biological role, catalyzes the interconversion of 2-phosphoglycerate and 3-phosphoglycerate. The polypeptide is 2,3-bisphosphoglycerate-dependent phosphoglycerate mutase (Thermobifida fusca (strain YX)).